The primary structure comprises 140 residues: Immunity protein RhsIC (140 aa).

Putative immunity protein component of a toxin-immunity protein module, which may function as a cellular contact-dependent growth inhibition (CDI) system. Blocks the toxic effects of expression of the C-terminus (residues 1519-1658) of cognate toxin RhsC in E.coli. The chain is Immunity protein RhsIC (rhsIC) from Dickeya dadantii (strain 3937) (Erwinia chrysanthemi (strain 3937)).